Consider the following 1394-residue polypeptide: DNA-directed RNA polymerase subunit beta' (1394 aa).

Residues C71, C73, C86, and C89 each coordinate Zn(2+). Mg(2+) contacts are provided by D462, D464, and D466. Positions 811, 885, 892, and 895 each coordinate Zn(2+).

The protein belongs to the RNA polymerase beta' chain family. As to quaternary structure, the RNAP catalytic core consists of 2 alpha, 1 beta, 1 beta' and 1 omega subunit. When a sigma factor is associated with the core the holoenzyme is formed, which can initiate transcription. It depends on Mg(2+) as a cofactor. Requires Zn(2+) as cofactor.

It carries out the reaction RNA(n) + a ribonucleoside 5'-triphosphate = RNA(n+1) + diphosphate. DNA-dependent RNA polymerase catalyzes the transcription of DNA into RNA using the four ribonucleoside triphosphates as substrates. This Xanthobacter autotrophicus (strain ATCC BAA-1158 / Py2) protein is DNA-directed RNA polymerase subunit beta'.